Reading from the N-terminus, the 378-residue chain is Protein SLG1 (378 aa).

Positions 1–21 (MRPNKTSLLLALLSILSQANA) are cleaved as a signal peptide. One can recognise a WSC domain in the interval 22–110 (YEYVNCFSSL…EDAYSVYQLD (89 aa)). Residues 22–264 (YEYVNCFSSL…THKKKANVGA (243 aa)) are Extracellular-facing. Residue N65 is glycosylated (N-linked (GlcNAc...) asparagine). Disordered stretches follow at residues 115 to 201 (SNSI…TSST) and 236 to 256 (QNSG…SKTH). Over residues 236-253 (QNSGSATGTAGSDSTSGS) the composition is skewed to low complexity. Residues 265 to 285 (IVGGVVGGVVGAVAIALCILL) traverse the membrane as a helical segment. The Cytoplasmic segment spans residues 286-378 (IVRHINMKRE…LTVVNPDEAD (93 aa)). The disordered stretch occupies residues 318–378 (ASSFSSNHGP…LTVVNPDEAD (61 aa)). Over residues 319 to 331 (SSFSSNHGPSSGS) the composition is skewed to low complexity. Phosphoserine occurs at positions 331 and 353.

Post-translationally, glycosylated. Phosphorylated. Phosphorylation serves a negative regulatory role.

Its subcellular location is the cell membrane. Plays a role during G1 to regulate entering or exiting the cell cycle. Involved in stress responses. Has a role in cell wall integrity signaling. Activates ROM1 or ROM2 catalyzed guanine nucleotide exchange toward RHO1. Important regulator of the actin cytoskeleton rearrangements in conditions of cell wall expansion and membrane stretching. Specifically required for the actin reorganization induced by hypo-osmotic shock. Multicopy suppressor of 1,3-beta-glucan synthase (GS). Activates GS upstream of RHO1. Acts positively on the PKC1-MAPK pathway. Activates transiently SLT2 during alkaline stress, which leads to an increase in the expression of several specific genes. The chain is Protein SLG1 (SLG1) from Saccharomyces cerevisiae (strain ATCC 204508 / S288c) (Baker's yeast).